A 642-amino-acid chain; its full sequence is Fork head protein homolog 2 (642 aa).

A disordered region spans residues 1–23 (MTVRRLESKSEHISDDEERKEQL). The region spanning 96–160 (IILGREPANP…NGIKVDGKLF (65 aa)) is the FHA domain. The fork-head DNA-binding region spans 223 to 318 (KPPYSYSVMI…AKTRKTPRKR (96 aa)). Residues 310 to 319 (KTRKTPRKRS) are compositionally biased toward basic residues. 3 disordered regions span residues 310–392 (KTRK…ETYK), 519–574 (VSDS…TEEN), and 586–642 (ATME…KSSA). A phosphoserine mark is found at serine 319, serine 321, serine 322, serine 334, and serine 336. Residues 348–362 (TSIPAAEPASSTTSA) are compositionally biased toward low complexity. Composition is skewed to polar residues over residues 363–381 (RDQT…TAET), 519–552 (VSDS…SANK), and 599–642 (TPTS…KSSA). 3 positions are modified to phosphoserine: serine 375, serine 535, and serine 626.

Phosphorylated. Occurs periodically during mitosis.

The protein resides in the nucleus. Its function is as follows. Required for promoter sequence element PCB-driven, M-phase-specific transcription. Acts as a transcriptional activator with a role in the regulation of mitosis. Binds, cooperatively with mcm1, the CLB cluster regulatory elements throughout the cell cycle. Regulates the periodic transcription of cdc15 and spo12. Required for the correct timing, positioning and contraction of the division septum. The polypeptide is Fork head protein homolog 2 (fkh2) (Schizosaccharomyces pombe (strain 972 / ATCC 24843) (Fission yeast)).